The primary structure comprises 471 residues: 3-isopropylmalate dehydratase large subunit (471 aa).

Positions 347, 407, and 410 each coordinate [4Fe-4S] cluster.

Belongs to the aconitase/IPM isomerase family. LeuC type 1 subfamily. Heterodimer of LeuC and LeuD. [4Fe-4S] cluster serves as cofactor.

It carries out the reaction (2R,3S)-3-isopropylmalate = (2S)-2-isopropylmalate. It functions in the pathway amino-acid biosynthesis; L-leucine biosynthesis; L-leucine from 3-methyl-2-oxobutanoate: step 2/4. Catalyzes the isomerization between 2-isopropylmalate and 3-isopropylmalate, via the formation of 2-isopropylmaleate. The sequence is that of 3-isopropylmalate dehydratase large subunit from Prochlorococcus marinus (strain MIT 9211).